The sequence spans 166 residues: Large ribosomal subunit protein uL10 (166 aa).

Belongs to the universal ribosomal protein uL10 family. As to quaternary structure, part of the ribosomal stalk of the 50S ribosomal subunit. The N-terminus interacts with L11 and the large rRNA to form the base of the stalk. The C-terminus forms an elongated spine to which L12 dimers bind in a sequential fashion forming a multimeric L10(L12)X complex.

Forms part of the ribosomal stalk, playing a central role in the interaction of the ribosome with GTP-bound translation factors. The protein is Large ribosomal subunit protein uL10 of Aromatoleum aromaticum (strain DSM 19018 / LMG 30748 / EbN1) (Azoarcus sp. (strain EbN1)).